The following is a 171-amino-acid chain: Adenine phosphoribosyltransferase (171 aa).

It belongs to the purine/pyrimidine phosphoribosyltransferase family. In terms of assembly, homodimer.

It is found in the cytoplasm. The enzyme catalyses AMP + diphosphate = 5-phospho-alpha-D-ribose 1-diphosphate + adenine. The protein operates within purine metabolism; AMP biosynthesis via salvage pathway; AMP from adenine: step 1/1. Catalyzes a salvage reaction resulting in the formation of AMP, that is energically less costly than de novo synthesis. In Mesomycoplasma hyopneumoniae (strain 232) (Mycoplasma hyopneumoniae), this protein is Adenine phosphoribosyltransferase.